A 198-amino-acid chain; its full sequence is Calcium channel flower (198 aa).

Transmembrane regions (helical) follow at residues 36 to 56 (LGIV…LSII), 67 to 89 (IIQM…VCIE), and 114 to 134 (AVPP…GLIF).

The protein belongs to the calcium channel flower family. As to quaternary structure, homomultimer. Associates with the dally/ magu complex.

The protein localises to the cell membrane. It is found in the cytoplasmic vesicle. It localises to the secretory vesicle. Its subcellular location is the synaptic vesicle membrane. The protein resides in the presynaptic cell membrane. The protein localises to the endosome. With respect to regulation, channel activity is inhibited by La(3+), which reduces Ca(2+) influx and thus inhibits it's function in promoting activity-dependent bulk endocytosis (ADBE) in response to high stimuli. Transmembrane protein which mediates synaptic endocytosis, fitness-based cell culling, neuronal culling, morphogen gradient scaling, and calcium transport. Regulates synaptic endocytosis and hence couples exo- with endocytosis. Controls two major modes of synaptic vesicle (SV) endocytosis in the synaptic boutons of neuromuscular junctions (NMJs); Ca(2+) channel-independent Clathrin-mediated endocytosis (CME) in response to mild stimulation, and Ca(2+) channel-dependent activity-dependent bulk endocytosis (ADBE) in response to strong stimulation. Functions in ADBE and subsequent SV reformation from bulk endosomes by initiating Ca(2+) channel-dependent phosphatidylinositol 4,5-bisphosphate (PtdIns(4,5)P2) compartmentalization in synaptic boutons. There it acts at the periactive zone to provide the low Ca(2+) levels required to initiate Calcineurin activation and upregulate PtdIns(4,5)P2. Conversely PtdIns(4,5)P2 enhances fwe Ca(2+) channel-activity, establishing a positive feedback loop that induces PtdIns(4,5)P2 microdomain at the periactive zone. These microdomains trigger bulk membrane invagination (i.e. ADBE) by triggering actin polymerization while also promoting localization of fwe to bulk endosomes, thereby removing the ADBE trigger to reduce endocytosis and prevent excess membrane uptake. PtdIns(4,5)P2 then promotes SV reformation from the bulk endosomes, to coordinate ADBE and subsequent SV reformation. Different combinations of the flower isoforms at the cell membrane are also required for the identification and elimination of suboptimal or supernumerary cells during development, regeneration, and adulthood. Required for the recognition and elimination of unfit cells in the developing wing during cell competition. In the developing pupal retina, mediates the elimination of unwanted postmitotic neurons, including supernumerary photoreceptor neurons that form at the periphery of the retina and are contained within incomplete ommatidia units. Also required for efficient elimination and replacement of old neurons by newly generated neurons during regeneration in the adult brain following mechanical injury. Downstream of the flower fitness fingerprints, cells identified as unwanted or unfit are eliminated via apoptosis through the expression of ahuizotl (azot). However, the cells marked for elimination by the flower isoforms only undergo apoptosis if additional thresholds are met; (1) their neighboring fit/healthy cells express different levels of the fwe isoforms, and (2) the levels of the protective signal SPARC expressed by the loser or unwanted cells are unable to inhibit caspase activation. These additional thresholds for flower-mediated apoptosis, allows useful cells to recover from transient and limited stress before they are unnecessarily eliminated. Functions with dally and magu in a mechanism of scaling, which utilises apoptosis to ensure that the dpp morphogen gradient, which mediates organ growth, remains proportional to the size of the growing wing. In this mechanism, fwe represses dally- and Magu-dependent activity in expanding the gradient, and dally/Magu inhibits fwe-dependent apoptosis to keep cell death rate low. When the levels of these different proteins are optimally regulated the gradient correctly scales with organ growth but when this fails, fwe-mediated apoptosis is activated to trim the developing tissue to match the correct size of the gradient. This is Calcium channel flower from Drosophila persimilis (Fruit fly).